A 593-amino-acid chain; its full sequence is Prospero homeobox protein 2 (593 aa).

6 disordered regions span residues Cys-24–Ser-48, Ser-79–Arg-130, Thr-153–Cys-199, Gln-260–Lys-284, Pro-298–Leu-333, and Gly-356–Leu-388. Over residues Arg-87–Arg-99 the composition is skewed to basic and acidic residues. Low complexity predominate over residues Pro-167–Ser-181. Over residues Trp-363–Glu-380 the composition is skewed to polar residues. The Prospero-type homeo domain occupies Gln-433 to Met-491. The tract at residues Gln-433–Phe-591 is homeo-Prospero. A Prospero domain is found at Glu-492–Phe-591.

This sequence belongs to the Prospero homeodomain family. In terms of tissue distribution, expressed in testis.

The protein resides in the nucleus. In terms of biological role, transcription regulator. Does not seem to be essential for embryonic development and postnatal survival. This is Prospero homeobox protein 2 (Prox2) from Mus musculus (Mouse).